The chain runs to 442 residues: O-acetyl-L-homoserine sulfhydrylase (442 aa).

Residues 1 to 32 (MVGPSGESMPRNFKPETIALHGGQEPDPTTTS) form a disordered region. At lysine 216 the chain carries N6-(pyridoxal phosphate)lysine.

Belongs to the trans-sulfuration enzymes family. Pyridoxal 5'-phosphate serves as cofactor.

The enzyme catalyses O-acetyl-L-homoserine + hydrogen sulfide = L-homocysteine + acetate. The protein operates within amino-acid biosynthesis; L-methionine biosynthesis via de novo pathway; L-homocysteine from O-acetyl-L-homoserine: step 1/1. With respect to regulation, feedback inhibited at very high concentrations of methionine or S-adenosylmethionine. Its function is as follows. Catalyzes the conversion of O-acetyl-L-homoserine (OAH) into homocysteine in the methionine biosynthesis pathway. Can also use O-succinyl-homoserine (OSH), although at low efficiency. This Leptospira meyeri protein is O-acetyl-L-homoserine sulfhydrylase.